A 320-amino-acid chain; its full sequence is NADH-ubiquinone oxidoreductase chain 1 (320 aa).

The next 8 membrane-spanning stretches (helical) occupy residues 3-23 (LITI…VAFL), 72-92 (ILLI…WTPI), 103-123 (LGFL…LWAG), 147-167 (VTLG…TMQL), 174-194 (HIWL…STLA), 226-246 (FFLA…ILFI), 255-275 (ELFL…FLWI), and 295-315 (FLPL…SISG).

Belongs to the complex I subunit 1 family.

It is found in the mitochondrion inner membrane. The catalysed reaction is a ubiquinone + NADH + 5 H(+)(in) = a ubiquinol + NAD(+) + 4 H(+)(out). Functionally, core subunit of the mitochondrial membrane respiratory chain NADH dehydrogenase (Complex I) that is believed to belong to the minimal assembly required for catalysis. Complex I functions in the transfer of electrons from NADH to the respiratory chain. The immediate electron acceptor for the enzyme is believed to be ubiquinone. This Varanus jobiensis (Peach throat monitor) protein is NADH-ubiquinone oxidoreductase chain 1 (MT-ND1).